The following is a 637-amino-acid chain: Chaperone protein DnaK (637 aa).

Threonine 203 is modified (phosphothreonine; by autocatalysis). The segment at 600-637 is disordered; that stretch reads SAVYGQQQEQGAPAQEEPSAEGKKNDDEGTVEGEFREV. The span at 604 to 616 shows a compositional bias: low complexity; that stretch reads GQQQEQGAPAQEE. The span at 619-637 shows a compositional bias: basic and acidic residues; sequence AEGKKNDDEGTVEGEFREV.

The protein belongs to the heat shock protein 70 family.

Acts as a chaperone. This is Chaperone protein DnaK from Dehalococcoides mccartyi (strain ATCC BAA-2266 / KCTC 15142 / 195) (Dehalococcoides ethenogenes (strain 195)).